The sequence spans 99 residues: Carboxysome shell vertex protein CcmL (99 aa).

Residues 1–83 (MRIAKVRGTV…VDAAVIAIID (83 aa)) form the BMV domain.

This sequence belongs to the CcmL/EutN family. CcmL subfamily. As to quaternary structure, homopentamer. Interacts with full-length CcmM.

It localises to the carboxysome. Functionally, probably forms vertices in the carboxysome, a polyhedral inclusion where RuBisCO (ribulose bisphosphate carboxylase, rbcL-rbcS) is sequestered. Has been modeled to induce curvature upon insertion into an otherwise flat hexagonal molecular layer of CcmK subunits. Its function is as follows. Beta-carboxysome assembly initiates when soluble RuBisCO is condensed into a liquid matrix in a pre-carboxysome by the RbcS-like domains of probably both CcmM58 and CcmM35. CcmN interacts with the N-terminus of CcmM58, and then recruits the CcmK2 major shell protein via CcmN's encapsulation peptide. Shell formation requires CcmK proteins and CcmO. CcmL caps the otherwise elongated carboxysome. Once fully encapsulated carboxysomes are formed, they migrate within the cell probably via interactions with the cytoskeleton. This Synechococcus elongatus (strain ATCC 33912 / PCC 7942 / FACHB-805) (Anacystis nidulans R2) protein is Carboxysome shell vertex protein CcmL.